We begin with the raw amino-acid sequence, 145 residues long: SsrA-binding protein (145 aa).

Belongs to the SmpB family.

The protein localises to the cytoplasm. Required for rescue of stalled ribosomes mediated by trans-translation. Binds to transfer-messenger RNA (tmRNA), required for stable association of tmRNA with ribosomes. tmRNA and SmpB together mimic tRNA shape, replacing the anticodon stem-loop with SmpB. tmRNA is encoded by the ssrA gene; the 2 termini fold to resemble tRNA(Ala) and it encodes a 'tag peptide', a short internal open reading frame. During trans-translation Ala-aminoacylated tmRNA acts like a tRNA, entering the A-site of stalled ribosomes, displacing the stalled mRNA. The ribosome then switches to translate the ORF on the tmRNA; the nascent peptide is terminated with the 'tag peptide' encoded by the tmRNA and targeted for degradation. The ribosome is freed to recommence translation, which seems to be the essential function of trans-translation. The chain is SsrA-binding protein from Mycoplasmopsis pulmonis (strain UAB CTIP) (Mycoplasma pulmonis).